A 180-amino-acid chain; its full sequence is Dephospho-CoA kinase (180 aa).

Residues 2-180 (VIGVTGKIGT…VMKLVWEKRE (179 aa)) form the DPCK domain. 10 to 15 (GTGKST) is a binding site for ATP.

Belongs to the CoaE family.

Its subcellular location is the cytoplasm. The enzyme catalyses 3'-dephospho-CoA + ATP = ADP + CoA + H(+). It participates in cofactor biosynthesis; coenzyme A biosynthesis; CoA from (R)-pantothenate: step 5/5. In terms of biological role, catalyzes the phosphorylation of the 3'-hydroxyl group of dephosphocoenzyme A to form coenzyme A. In Thermotoga maritima (strain ATCC 43589 / DSM 3109 / JCM 10099 / NBRC 100826 / MSB8), this protein is Dephospho-CoA kinase.